The primary structure comprises 348 residues: Flap endonuclease 1 (348 aa).

The tract at residues 1–98 is N-domain; sequence MGLAELRELI…ETLERRRERK (98 aa). Mg(2+) contacts are provided by Asp28, Asp80, Glu149, Glu151, Asp170, Asp172, and Asp234. Residues 113–256 form an I-domain region; sequence EREKYARQVA…RALQLIRKYG (144 aa). The interaction with PCNA stretch occupies residues 340–348; sequence RQETLDAFF.

This sequence belongs to the XPG/RAD2 endonuclease family. FEN1 subfamily. As to quaternary structure, interacts with PCNA. PCNA stimulates the nuclease activity without altering cleavage specificity. It depends on Mg(2+) as a cofactor.

Functionally, structure-specific nuclease with 5'-flap endonuclease and 5'-3' exonuclease activities involved in DNA replication and repair. During DNA replication, cleaves the 5'-overhanging flap structure that is generated by displacement synthesis when DNA polymerase encounters the 5'-end of a downstream Okazaki fragment. Binds the unpaired 3'-DNA end and kinks the DNA to facilitate 5' cleavage specificity. Cleaves one nucleotide into the double-stranded DNA from the junction in flap DNA, leaving a nick for ligation. Also involved in the base excision repair (BER) pathway. Acts as a genome stabilization factor that prevents flaps from equilibrating into structures that lead to duplications and deletions. Also possesses 5'-3' exonuclease activity on nicked or gapped double-stranded DNA. The polypeptide is Flap endonuclease 1 (Methanopyrus kandleri (strain AV19 / DSM 6324 / JCM 9639 / NBRC 100938)).